The sequence spans 519 residues: MEGVLYKWTNYLSGWQPRWFLLCGGILSYYDSPEDAWKGCKGSIQMAVCEIQVHSVDNTRMDLIIPGEQYFYLKARSVAERQRWLVALGSAKACLTDSRTQKEKEFAENTENLKTKMSELRLYCDLLVQQVDKTKEVTTTGVSNSEEGIDVGTLLKSTCNTFLKTLEECMQIANAAFTSELLYRTPPGSPQLAMLKSSKMKHPIIPIHNSLERQMELNSCENGSLHMEINDGEEILMKNKSSLYLKPEIDCSISSEENTDDNITVQGEIMKEEGEDNLGNHDSSLAQPASDSSSSPPESHWEEGQEIIPTFFSTMNTSFSDIELLEDSGIPTEAFLASCYAVVPVLDKLGPTVFAPVKMDLVGNIKKVNQKYITNKEEFTTLQKIVLHEVEADVAQVRNSATEALLWLKRGLKFLKGFLTEVKNGEKDIQTALNNAYGKTLRQHHGWVVRGVFALALRAAPSYEDFVAALTIKEGDHQKAAFSVGMQRDLSLYLPAMEKQLAILDTLYEVHGLESDEVV.

The PH domain occupies 1–93 (MEGVLYKWTN…WLVALGSAKA (93 aa)). At Thr139 the chain carries Phosphothreonine. A Phosphoserine modification is found at Ser145. Thr153 carries the post-translational modification Phosphothreonine. Residues 274 to 302 (GEDNLGNHDSSLAQPASDSSSSPPESHWE) are disordered. The span at 282–298 (DSSLAQPASDSSSSPPE) shows a compositional bias: low complexity. The interval 310–519 (TFFSTMNTSF…VHGLESDEVV (210 aa)) is glycolipid transfer protein homology domain.

Homodimer. Interacts with ARF1; the interaction together with phosphatidylinositol 4-phosphate binding is required for FAPP2 GlcCer transfer ability.

The protein localises to the golgi apparatus. Its subcellular location is the trans-Golgi network membrane. It localises to the membrane. Its function is as follows. Cargo transport protein that is required for apical transport from the trans-Golgi network (TGN). Transports AQP2 from the trans-Golgi network (TGN) to sites of AQP2 phosphorylation. Mediates the non-vesicular transport of glucosylceramide (GlcCer) from the trans-Golgi network (TGN) to the plasma membrane and plays a pivotal role in the synthesis of complex glycosphingolipids. Binding of both phosphatidylinositol 4-phosphate (PIP) and ARF1 are essential for the GlcCer transfer ability. Also required for primary cilium formation, possibly by being involved in the transport of raft lipids to the apical membrane, and for membrane tubulation. In Canis lupus familiaris (Dog), this protein is Pleckstrin homology domain-containing family A member 8 (PLEKHA8).